Reading from the N-terminus, the 485-residue chain is Putative aldehyde dehydrogenase AldY (485 aa).

231–236 is an NAD(+) binding site; it reads GSTAVG. Active-site residues include Glu-253 and Cys-287.

This sequence belongs to the aldehyde dehydrogenase family.

It catalyses the reaction an aldehyde + NAD(+) + H2O = a carboxylate + NADH + 2 H(+). May contribute to protect cells against stress due to ethanol and related compounds. The protein is Putative aldehyde dehydrogenase AldY (aldY) of Bacillus subtilis (strain 168).